Consider the following 146-residue polypeptide: Large ribosomal subunit protein uL23B (146 aa).

The tract at residues 1–22 is disordered; the sequence is MAPSSNKVGKAIQAKKAVVKGS.

It belongs to the universal ribosomal protein uL23 family.

In terms of biological role, this protein binds to a specific region on the 26S rRNA. In Caenorhabditis elegans, this protein is Large ribosomal subunit protein uL23B (rpl-23A.2).